We begin with the raw amino-acid sequence, 92 residues long: Large ribosomal subunit protein bL34m (92 aa).

The N-terminal 46 residues, 1–46 (MALLAGSLLGPTSRSAALLGGRWLQPRAWLGFPDAWGLPTPQQARG), are a transit peptide targeting the mitochondrion. A compositionally biased stretch (polar residues) spans 40 to 57 (TPQQARGKSRGNEYQPSN). Residues 40–63 (TPQQARGKSRGNEYQPSNIKRKNK) are disordered. Ser71 bears the Phosphoserine mark.

Belongs to the bacterial ribosomal protein bL34 family. As to quaternary structure, component of the mitochondrial ribosome large subunit (39S) which comprises a 16S rRNA and about 50 distinct proteins.

The protein localises to the mitochondrion. The polypeptide is Large ribosomal subunit protein bL34m (MRPL34) (Macaca fascicularis (Crab-eating macaque)).